We begin with the raw amino-acid sequence, 191 residues long: Phospholipase A2-delta (191 aa).

The signal sequence occupies residues 1 to 25 (MIRGGALTHVALGLTVFLLLAVVHS). 6 disulfides stabilise this stretch: C29–C56, C33–C62, C38–C115, C49–C69, C68–C93, and C75–C86. Y48, G50, and Y53 together coordinate Ca(2+). The active site involves H72. D73 contacts Ca(2+). A disordered region spans residues 161–191 (KADTKDGLGTNQGPQTKDGSKVSVPMNPSPS).

The protein belongs to the phospholipase A2 family. Ca(2+) is required as a cofactor. In terms of tissue distribution, specifically expressed in flowers but at a low level. Detected specifically in the pollen.

Its subcellular location is the secreted. It localises to the endoplasmic reticulum. The enzyme catalyses a 1,2-diacyl-sn-glycero-3-phosphocholine + H2O = a 1-acyl-sn-glycero-3-phosphocholine + a fatty acid + H(+). Its function is as follows. PA2 catalyzes the calcium-dependent hydrolysis of the 2-acyl groups in 3-sn-phosphoglycerides. Releases lysophospholipids (LPLs) and free fatty acids (FFAs) from membrane phospholipids in response to hormones and other external stimuli. Plays a role in pollen development and germination and tube growth. This Arabidopsis thaliana (Mouse-ear cress) protein is Phospholipase A2-delta (PLA2-DELTA).